Here is a 317-residue protein sequence, read N- to C-terminus: Flavin-dependent thymidylate synthase (317 aa).

FAD is bound at residue Ser-46. The interval Phe-55–Thr-166 is insert. Residues Ala-100–Ile-317 enclose the ThyX domain. Residues Gln-178–Arg-181, Glu-189–Arg-193, and Arg-259 each bind dUMP. FAD is bound by residues Arg-181–Arg-183 and Glu-189. The ThyX motif motif lies at Arg-181 to Ser-191. Residue Asn-281 coordinates FAD. Arg-286 is a binding site for dUMP. Arg-286 functions as the Involved in ionization of N3 of dUMP, leading to its activation in the catalytic mechanism.

This sequence belongs to the thymidylate synthase ThyX family. In terms of assembly, homotetramer. FAD serves as cofactor.

It catalyses the reaction dUMP + (6R)-5,10-methylene-5,6,7,8-tetrahydrofolate + NADPH + H(+) = dTMP + (6S)-5,6,7,8-tetrahydrofolate + NADP(+). Its pathway is pyrimidine metabolism; dTTP biosynthesis. In terms of biological role, catalyzes the reductive methylation of 2'-deoxyuridine-5'-monophosphate (dUMP) to 2'-deoxythymidine-5'-monophosphate (dTMP) while utilizing 5,10-methylenetetrahydrofolate (mTHF) as the methyl donor, and NADPH and FADH(2) as the reductant. The chain is Flavin-dependent thymidylate synthase from Aquifex aeolicus (strain VF5).